A 374-amino-acid chain; its full sequence is Ribosomal RNA large subunit methyltransferase G (374 aa).

Belongs to the methyltransferase superfamily. RlmG family.

It is found in the cytoplasm. It carries out the reaction guanosine(1835) in 23S rRNA + S-adenosyl-L-methionine = N(2)-methylguanosine(1835) in 23S rRNA + S-adenosyl-L-homocysteine + H(+). In terms of biological role, specifically methylates the guanine in position 1835 (m2G1835) of 23S rRNA. The chain is Ribosomal RNA large subunit methyltransferase G from Pseudomonas syringae pv. tomato (strain ATCC BAA-871 / DC3000).